Here is a 246-residue protein sequence, read N- to C-terminus: Complement C1q tumor necrosis factor-related protein 3 (246 aa).

The first 22 residues, 1-22, serve as a signal peptide directing secretion; it reads MLWRQLIYWQLLALFFLPFCLC. Residues 51 to 113 form the Collagen-like domain; that stretch reads GYQGPPGPPG…KGEKGYPGIP (63 aa). Residues 53 to 110 form a disordered region; the sequence is QGPPGPPGPPGIPGNHGNNGNNGATGHEGAKGEKGDKGDLGPRGERGQHGPKGEKGYP. The segment covering 55–64 has biased composition (pro residues); sequence PPGPPGPPGI. Residues 65 to 74 show a composition bias toward low complexity; sequence PGNHGNNGNN. A glycan (N-linked (GlcNAc...) asparagine) is linked at Asn70. Positions 80–107 are enriched in basic and acidic residues; that stretch reads EGAKGEKGDKGDLGPRGERGQHGPKGEK. One can recognise a C1q domain in the interval 113–246; the sequence is PPELQIAFMA…FAGFLLFETK (134 aa).

Post-translationally, glycosylated on Asn-70. In terms of tissue distribution, expressed in colon and small intestine.

It localises to the secreted. This Homo sapiens (Human) protein is Complement C1q tumor necrosis factor-related protein 3 (C1QTNF3).